Reading from the N-terminus, the 351-residue chain is uncharacterized protein (351 aa).

An N-terminal signal peptide occupies residues 1-27 (MKNKKRVLIASSLSCAILLLSAATTQA). Residues 27-71 (ANSAHKDSQDQNKKEHVDKSQQKDKRNVTNKDKNSTAPDDIGKNG) are disordered. A compositionally biased stretch (basic and acidic residues) spans 30–60 (AHKDSQDQNKKEHVDKSQQKDKRNVTNKDKN).

Belongs to the aerolysin family.

This is an uncharacterized protein from Staphylococcus aureus (strain USA300).